The sequence spans 426 residues: 3-phosphoshikimate 1-carboxyvinyltransferase (426 aa).

3-phosphoshikimate-binding residues include Lys22, Ser23, and Arg27. Lys22 is a phosphoenolpyruvate binding site. Gly96 and Arg124 together coordinate phosphoenolpyruvate. Positions 170, 171, 172, 198, 314, 337, and 341 each coordinate 3-phosphoshikimate. Residue Gln172 participates in phosphoenolpyruvate binding. Catalysis depends on Asp314, which acts as the Proton acceptor. The phosphoenolpyruvate site is built by Arg345, Arg387, and Lys412.

It belongs to the EPSP synthase family. As to quaternary structure, monomer.

The protein localises to the cytoplasm. It carries out the reaction 3-phosphoshikimate + phosphoenolpyruvate = 5-O-(1-carboxyvinyl)-3-phosphoshikimate + phosphate. Its pathway is metabolic intermediate biosynthesis; chorismate biosynthesis; chorismate from D-erythrose 4-phosphate and phosphoenolpyruvate: step 6/7. Functionally, catalyzes the transfer of the enolpyruvyl moiety of phosphoenolpyruvate (PEP) to the 5-hydroxyl of shikimate-3-phosphate (S3P) to produce enolpyruvyl shikimate-3-phosphate and inorganic phosphate. The polypeptide is 3-phosphoshikimate 1-carboxyvinyltransferase (Shewanella sp. (strain MR-7)).